The sequence spans 130 residues: Sec-independent protein translocase protein TatB (130 aa).

The chain crosses the membrane as a helical span at residues 1–21 (MFDIGFWELVLIFVVGLVVLG). A disordered region spans residues 85–130 (LKQAAQSVNRPYADVSAKNEATSSSSSDATHQTEATKTSAANTKSE). Positions 112-130 (DATHQTEATKTSAANTKSE) are enriched in polar residues.

It belongs to the TatB family. In terms of assembly, the Tat system comprises two distinct complexes: a TatABC complex, containing multiple copies of TatA, TatB and TatC subunits, and a separate TatA complex, containing only TatA subunits. Substrates initially bind to the TatABC complex, which probably triggers association of the separate TatA complex to form the active translocon.

The protein resides in the cell inner membrane. Part of the twin-arginine translocation (Tat) system that transports large folded proteins containing a characteristic twin-arginine motif in their signal peptide across membranes. Together with TatC, TatB is part of a receptor directly interacting with Tat signal peptides. TatB may form an oligomeric binding site that transiently accommodates folded Tat precursor proteins before their translocation. The chain is Sec-independent protein translocase protein TatB from Vibrio vulnificus (strain CMCP6).